Reading from the N-terminus, the 1036-residue chain is Phytosulfokine receptor 2 (1036 aa).

Residues 1-16 form the signal peptide; the sequence is MVIILLLVFFVGSSVS. Asparagine 36 and asparagine 45 each carry an N-linked (GlcNAc...) asparagine glycan. LRR repeat units lie at residues 89 to 111, 113 to 136, 137 to 159, 160 to 182, 185 to 207, 209 to 231, 233 to 256, 257 to 279, 281 to 303, 305 to 326, 329 to 351, 353 to 375, 377 to 398, 403 to 423, 427 to 450, 451 to 473, and 475 to 498; these read ELRVLDLSRNQLKGEVPAEISKL, QLQVLDLSHNLLSGSVLGVVSGLK, LIQSLNISSNSLSGKLSDVGVFP, GLVMLNVSNNLFEGEIHPELCSS, GIQVLDLSMNRLVGNLDGLYNCS, SIQQLHIDSNRLTGQLPDYLYSI, ELEQLSLSGNYLSGELSKNLSNLS, GLKSLLISENRFSDVIPDVFGNL, QLEHLDVSSNKFSGRFPPSLSQC, KLRVLDLRNNSLSGSINLNFTG, DLCVLDLASNHFSGPLPDSLGHC, KMKILSLAKNEFRGKIPDTFKNL, SLLFLSLSNNSFVDFSETMNVL, NLSTLILSKNFIGEEIPNNVT, NLAILALGNCGLRGQIPSWLLNCK, KLEVLDLSWNHFYGTIPHWIGKM, and SLFYIDFSNNTLTGAIPVAITELK. Residues asparagine 142, asparagine 165, and asparagine 205 are each glycosylated (N-linked (GlcNAc...) asparagine). Asparagine 251, asparagine 254, and asparagine 278 each carry an N-linked (GlcNAc...) asparagine glycan. 2 N-linked (GlcNAc...) asparagine glycosylation sites follow: asparagine 313 and asparagine 323. N-linked (GlcNAc...) asparagine glycosylation is found at asparagine 385, asparagine 403, and asparagine 421. Asparagine 483, asparagine 504, asparagine 523, asparagine 549, and asparagine 571 each carry an N-linked (GlcNAc...) asparagine glycan. 2 LRR repeats span residues 561–583 and 585–606; these read ELHMLDLSRNNFTGTIPDSISGL and NLEVLDLSYNHLYGSIPLSFQS. The chain crosses the membrane as a helical span at residues 680–700; the sequence is IVVLTISLAIGITLLLSVILL. Threonine 751 bears the Phosphothreonine mark. The 272-residue stretch at 754-1025 folds into the Protein kinase domain; that stretch reads FSQANIIGCG…PLIEEVVTWL (272 aa). Residues 760–768 and lysine 782 contribute to the ATP site; that span reads IGCGGFGLV. Phosphotyrosine is present on residues tyrosine 827 and tyrosine 867. The Proton acceptor role is filled by aspartate 880. Phosphotyrosine is present on tyrosine 922. The stretch at 995–1020 is one LRR 20 repeat; sequence RTVLEMLEIACKCIDHEPRRRPLIEE.

The protein belongs to the protein kinase superfamily. Ser/Thr protein kinase family.

It is found in the cell membrane. It catalyses the reaction L-seryl-[protein] + ATP = O-phospho-L-seryl-[protein] + ADP + H(+). The enzyme catalyses L-threonyl-[protein] + ATP = O-phospho-L-threonyl-[protein] + ADP + H(+). Its function is as follows. Phytosulfokine receptor with a serine/threonine-protein kinase activity. In Arabidopsis thaliana (Mouse-ear cress), this protein is Phytosulfokine receptor 2 (PSKR2).